The following is a 217-amino-acid chain: GKFIIPQIVKYSPNCIIIVVSNPVDILTYVTWKLSGLPKHRVIGSGCNLDSARFRYLMAEKLGIHPSSCHGWILGEHGDSRLAVWSGVNVAGVSLQELNPEMGTDNDSENWKEVHKMVVESAYEVIKLKGYTNWAIGLSVADLIESMLKNLSRIHPVSTMVRGMYGIESEVFLSLPCILNARGLTSVINQKLKDDEVAQLKKSADTLWDIQKDLKDL.

Residue Asn-22 participates in NAD(+) binding. 2 residues coordinate substrate: Asn-22 and Arg-53. His-77 functions as the Proton acceptor in the catalytic mechanism. Tyr-123 is modified (phosphotyrosine). Thr-132 lines the substrate pocket. Lys-212 is modified (N6-acetyllysine).

It belongs to the LDH/MDH superfamily. LDH family. Homotetramer. Interacts with PTEN upstream reading frame protein MP31; the interaction leads to inhibition of mitochondrial lactate dehydrogenase activity, preventing conversion of lactate to pyruvate in mitochondria.

It localises to the cytoplasm. The protein resides in the mitochondrion inner membrane. The enzyme catalyses (S)-lactate + NAD(+) = pyruvate + NADH + H(+). It participates in fermentation; pyruvate fermentation to lactate; (S)-lactate from pyruvate: step 1/1. Interconverts simultaneously and stereospecifically pyruvate and lactate with concomitant interconversion of NADH and NAD(+). The protein is L-lactate dehydrogenase B chain (LDHB) of Oryctolagus cuniculus (Rabbit).